The chain runs to 438 residues: Na(+)/H(+) antiporter NhaA (438 aa).

11 helical membrane-spanning segments follow: residues 23-43, 62-82, 104-124, 133-153, 162-182, 185-205, 212-232, 302-322, 337-357, 372-392, and 410-430; these read FGGI…NSFV, FFIG…LFFL, SFPV…YFFL, GFGI…MLLG, VFLI…IALF, TNLK…LALL, SLIP…QSGI, FLAP…NAGV, LGVI…ITFI, WWHI…SMFI, and IAIL…LFLL.

It belongs to the NhaA Na(+)/H(+) (TC 2.A.33) antiporter family.

The protein localises to the cell inner membrane. It carries out the reaction Na(+)(in) + 2 H(+)(out) = Na(+)(out) + 2 H(+)(in). Functionally, na(+)/H(+) antiporter that extrudes sodium in exchange for external protons. This is Na(+)/H(+) antiporter NhaA from Helicobacter acinonychis (strain Sheeba).